A 376-amino-acid polypeptide reads, in one-letter code: Deoxyuridine 5'-triphosphate nucleotidohydrolase (376 aa).

This sequence belongs to the dUTPase family. It depends on Mg(2+) as a cofactor.

It carries out the reaction dUTP + H2O = dUMP + diphosphate + H(+). Involved in nucleotide metabolism: produces dUMP, the immediate precursor of thymidine nucleotides and decreases the intracellular concentration of dUTP to avoid uracil incorporation into viral DNA. The polypeptide is Deoxyuridine 5'-triphosphate nucleotidohydrolase (Human herpesvirus 6A (strain GS) (HHV-6 variant A)).